Consider the following 243-residue polypeptide: MGHKIHPSGLRLGITQEHRSKWFATSKTYPILLQEDFKIRTFIEKKYGAAGISDVLIARKADQLELELKTARPGVIVGRQGSGIEELRSGIQKTIGDRTRQVRINVVEVERVDADAFLLAEYIAQQLEKRVAFRRTIRMALQRAQRAGVLGLKIQVGGRLNGAEIARTEWTREGRVPLHTLRAEIDYATREANTTYGVLGIKVWVFKGEVLPKEEQTIPVGANPKRKASRRPQQFEDRSNENS.

Positions 39–110 constitute a KH type-2 domain; sequence IRTFIEKKYG…QVRINVVEVE (72 aa). The disordered stretch occupies residues 216 to 243; it reads QTIPVGANPKRKASRRPQQFEDRSNENS. Residues 233 to 243 show a composition bias toward basic and acidic residues; that stretch reads QQFEDRSNENS.

The protein belongs to the universal ribosomal protein uS3 family. As to quaternary structure, part of the 30S ribosomal subunit. Forms a tight complex with proteins S10 and S14.

In terms of biological role, binds the lower part of the 30S subunit head. Binds mRNA in the 70S ribosome, positioning it for translation. The sequence is that of Small ribosomal subunit protein uS3 from Prochlorococcus marinus (strain MIT 9215).